The chain runs to 292 residues: AKT-interacting protein (292 aa).

Residues 1–11 (MNPLWSMSSGS) show a composition bias toward polar residues. The disordered stretch occupies residues 1–64 (MNPLWSMSSG…SPAPAAQSTN (64 aa)). A compositionally biased stretch (basic and acidic residues) spans 14–23 (KRAEGEEKTL). Ser30 is subject to Phosphoserine. Residues 74-222 (YLEYSLLAEF…VVDSVKVCTA (149 aa)) form the UBC core domain.

Belongs to the ubiquitin-conjugating enzyme family. FTS subfamily. In terms of assembly, component of the FTS/Hook/FHIP complex (FHF complex), composed of AKTIP/FTS, FHIP1B, and one or more members of the Hook family of proteins HOOK1, HOOK2, and HOOK3. Interacts directly with HOOK1, HOOK2 and HOOK3. The FHF complex associates with the homotypic vesicular sorting complex (the HOPS complex). Also interacts with AKT1. May interact with FHIP1A.

Its subcellular location is the cytoplasm. The protein localises to the cell membrane. In terms of biological role, component of the FTS/Hook/FHIP complex (FHF complex). The FHF complex may function to promote vesicle trafficking and/or fusion via the homotypic vesicular protein sorting complex (the HOPS complex). Regulates apoptosis by enhancing phosphorylation and activation of AKT1. Increases release of TNFSF6 via the AKT1/GSK3B/NFATC1 signaling cascade. FHF complex promotes the distribution of AP-4 complex to the perinuclear area of the cell. This chain is AKT-interacting protein (Aktip), found in Rattus norvegicus (Rat).